The sequence spans 455 residues: tRNA-2-methylthio-N(6)-dimethylallyladenosine synthase (455 aa).

The MTTase N-terminal domain maps to 18 to 136 (KLFFIQTYGC…FPEYLNRVKT (119 aa)). Residues C27, C63, C97, C173, C177, and C180 each coordinate [4Fe-4S] cluster. A Radical SAM core domain is found at 159 to 389 (RKSDIKGFVT…VEIVNTGIAK (231 aa)). Residues 392–455 (KDAEGKIYEV…SFSLIGEVEK (64 aa)) form the TRAM domain.

The protein belongs to the methylthiotransferase family. MiaB subfamily. Monomer. Requires [4Fe-4S] cluster as cofactor.

The protein resides in the cytoplasm. It catalyses the reaction N(6)-dimethylallyladenosine(37) in tRNA + (sulfur carrier)-SH + AH2 + 2 S-adenosyl-L-methionine = 2-methylsulfanyl-N(6)-dimethylallyladenosine(37) in tRNA + (sulfur carrier)-H + 5'-deoxyadenosine + L-methionine + A + S-adenosyl-L-homocysteine + 2 H(+). In terms of biological role, catalyzes the methylthiolation of N6-(dimethylallyl)adenosine (i(6)A), leading to the formation of 2-methylthio-N6-(dimethylallyl)adenosine (ms(2)i(6)A) at position 37 in tRNAs that read codons beginning with uridine. This is tRNA-2-methylthio-N(6)-dimethylallyladenosine synthase from Clostridium beijerinckii (strain ATCC 51743 / NCIMB 8052) (Clostridium acetobutylicum).